We begin with the raw amino-acid sequence, 75 residues long: Exodeoxyribonuclease 7 small subunit (75 aa).

It belongs to the XseB family. Heterooligomer composed of large and small subunits.

It is found in the cytoplasm. It catalyses the reaction Exonucleolytic cleavage in either 5'- to 3'- or 3'- to 5'-direction to yield nucleoside 5'-phosphates.. Functionally, bidirectionally degrades single-stranded DNA into large acid-insoluble oligonucleotides, which are then degraded further into small acid-soluble oligonucleotides. In Chlamydia abortus (strain DSM 27085 / S26/3) (Chlamydophila abortus), this protein is Exodeoxyribonuclease 7 small subunit.